A 655-amino-acid chain; its full sequence is Inactive serine protease scarface (655 aa).

Positions 1 to 24 (MSASHFREQLALCITLAVLAAASG) are cleaved as a signal peptide. 2 stretches are compositionally biased toward polar residues: residues 213–225 (TQAP…TTAV) and 237–252 (PSTT…QTSR). The interval 213 to 319 (TQAPFRPQPT…QPSNQKPIYR (107 aa)) is disordered. The interval 343–407 (KCASALVCTS…PNYVDPWPVN (65 aa)) is CLIP. 7 disulfides stabilise this stretch: Cys344–Cys394, Cys350–Cys383, Cys356–Cys395, Cys450–Cys466, Cys547–Cys605, Cys579–Cys587, and Cys595–Cys623. Residues 421–644 (PTGVKDLDAN…DIKWINTAFA (224 aa)) enclose the Peptidase S1 domain.

This sequence belongs to the peptidase S1 family.

The protein resides in the secreted. Its function is as follows. Inactive serine protease that plays a role in germ-band retraction and dorsal closure morphogenesis in embryogenesis; contributes to amnioserosa attachment and epithelial apico-basal polarity by regulating the localization of laminin LanA on the apical side of the amnioserosa epithelium. Contributes to epithelial morphogenesis probably by regulating the bsk/JNK pathway, as part of a negative-feedback loop, and by modulating the cross-talk between the Egfr, bsk/JNK and dpp signal transduction pathways. In larval development, antagonizes the morphogenetic movements controlled by the bsk/JNK signaling including male genitalia formation and thorax development. The protein is Inactive serine protease scarface of Drosophila melanogaster (Fruit fly).